The chain runs to 471 residues: UDP-N-acetylmuramoylalanine--D-glutamate ligase (471 aa).

123 to 129 (GTNGKST) provides a ligand contact to ATP.

It belongs to the MurCDEF family.

The protein resides in the cytoplasm. The catalysed reaction is UDP-N-acetyl-alpha-D-muramoyl-L-alanine + D-glutamate + ATP = UDP-N-acetyl-alpha-D-muramoyl-L-alanyl-D-glutamate + ADP + phosphate + H(+). The protein operates within cell wall biogenesis; peptidoglycan biosynthesis. Functionally, cell wall formation. Catalyzes the addition of glutamate to the nucleotide precursor UDP-N-acetylmuramoyl-L-alanine (UMA). The protein is UDP-N-acetylmuramoylalanine--D-glutamate ligase of Caulobacter vibrioides (strain ATCC 19089 / CIP 103742 / CB 15) (Caulobacter crescentus).